A 413-amino-acid chain; its full sequence is CCA-adding enzyme (413 aa).

The ATP site is built by Ser42 and Lys45. Positions 42 and 45 each coordinate CTP. 3 residues coordinate Mg(2+): Asp54, Asp56, and Asp107. Residues His130, Lys150, and Tyr159 each contribute to the ATP site. CTP contacts are provided by His130, Lys150, and Tyr159.

Belongs to the tRNA nucleotidyltransferase/poly(A) polymerase family. Archaeal CCA-adding enzyme subfamily. In terms of assembly, homodimer. Mg(2+) serves as cofactor.

The enzyme catalyses a tRNA precursor + 2 CTP + ATP = a tRNA with a 3' CCA end + 3 diphosphate. The catalysed reaction is a tRNA with a 3' CCA end + 2 CTP + ATP = a tRNA with a 3' CCACCA end + 3 diphosphate. Its function is as follows. Catalyzes the addition and repair of the essential 3'-terminal CCA sequence in tRNAs without using a nucleic acid template. Adds these three nucleotides in the order of C, C, and A to the tRNA nucleotide-73, using CTP and ATP as substrates and producing inorganic pyrophosphate. tRNA 3'-terminal CCA addition is required both for tRNA processing and repair. Also involved in tRNA surveillance by mediating tandem CCA addition to generate a CCACCA at the 3' terminus of unstable tRNAs. While stable tRNAs receive only 3'-terminal CCA, unstable tRNAs are marked with CCACCA and rapidly degraded. In Sulfurisphaera tokodaii (strain DSM 16993 / JCM 10545 / NBRC 100140 / 7) (Sulfolobus tokodaii), this protein is CCA-adding enzyme.